We begin with the raw amino-acid sequence, 144 residues long: Small ribosomal subunit protein uS12 (144 aa).

The tract at residues 1-55 is disordered; that stretch reads MPTINQLVRKGREDKVVKSKSPALQKGYNSFKKSQTNQSSPQKRGVCTRVGTMTP. Residues 27-42 are compositionally biased toward polar residues; that stretch reads GYNSFKKSQTNQSSPQ. Position 102 is a 3-methylthioaspartic acid (aspartate 102). A disordered region spans residues 119-144; it reads GVNNRKQGRSKYGTKRPKPGQAAAKK. The span at 124 to 144 shows a compositional bias: basic residues; that stretch reads KQGRSKYGTKRPKPGQAAAKK.

It belongs to the universal ribosomal protein uS12 family. Part of the 30S ribosomal subunit. Contacts proteins S8 and S17. May interact with IF1 in the 30S initiation complex.

Its function is as follows. With S4 and S5 plays an important role in translational accuracy. Functionally, interacts with and stabilizes bases of the 16S rRNA that are involved in tRNA selection in the A site and with the mRNA backbone. Located at the interface of the 30S and 50S subunits, it traverses the body of the 30S subunit contacting proteins on the other side and probably holding the rRNA structure together. The combined cluster of proteins S8, S12 and S17 appears to hold together the shoulder and platform of the 30S subunit. In Brevibacillus brevis (strain 47 / JCM 6285 / NBRC 100599), this protein is Small ribosomal subunit protein uS12.